A 404-amino-acid polypeptide reads, in one-letter code: Cysteine desulfurase IscS (404 aa).

Residues 75–76 (AT), N155, Q183, and 203–205 (SGH) contribute to the pyridoxal 5'-phosphate site. Position 206 is an N6-(pyridoxal phosphate)lysine (K206). T243 provides a ligand contact to pyridoxal 5'-phosphate. C328 (cysteine persulfide intermediate) is an active-site residue. C328 serves as a coordination point for [2Fe-2S] cluster.

The protein belongs to the class-V pyridoxal-phosphate-dependent aminotransferase family. NifS/IscS subfamily. As to quaternary structure, homodimer. Forms a heterotetramer with IscU, interacts with other sulfur acceptors. It depends on pyridoxal 5'-phosphate as a cofactor.

It is found in the cytoplasm. It carries out the reaction (sulfur carrier)-H + L-cysteine = (sulfur carrier)-SH + L-alanine. Its pathway is cofactor biosynthesis; iron-sulfur cluster biosynthesis. Master enzyme that delivers sulfur to a number of partners involved in Fe-S cluster assembly, tRNA modification or cofactor biosynthesis. Catalyzes the removal of elemental sulfur atoms from cysteine to produce alanine. Functions as a sulfur delivery protein for Fe-S cluster synthesis onto IscU, an Fe-S scaffold assembly protein, as well as other S acceptor proteins. The chain is Cysteine desulfurase IscS from Shewanella sp. (strain ANA-3).